The following is a 623-amino-acid chain: Scarecrow-like protein 22 (623 aa).

2 disordered regions span residues 62–90 (RSPSPFVSSSTTTLSSSHGGPSGGGAAAA) and 179–203 (PNPGFFSDPPSSPPAKRLNSGQPGS). The segment covering 63-80 (SPSPFVSSSTTTLSSSHG) has biased composition (low complexity). A GRAS domain is found at 235–622 (NDQDQSAVII…KELVTVSAWK (388 aa)). The leucine repeat I (LRI) stretch occupies residues 242–311 (VIIDQLFSAA…ALHSLLQDSS (70 aa)). The segment at 330–398 (YRAFSETSPF…SSAPSLKITA (69 aa)) is VHIID. A VHIID motif is present at residues 361-365 (IHIVD). A leucine repeat II (LRII) region spans residues 413–448 (FTEENLRSFAGETGVSFEIELLNMEILLNPTYWPLS). The segment at 458–545 (IAVNLPISSM…RFCVQPSIQK (88 aa)) is PFYRE. An SAW region spans residues 548-622 (TNRYRWMERS…KELVTVSAWK (75 aa)).

This sequence belongs to the GRAS family. In terms of tissue distribution, expressed in seedlings, roots, leaves and flowers.

The protein localises to the nucleus. Probable transcription factor involved in plant development. The polypeptide is Scarecrow-like protein 22 (SCL22) (Arabidopsis thaliana (Mouse-ear cress)).